Reading from the N-terminus, the 361-residue chain is Chorismate synthase (361 aa).

Positions 48 and 54 each coordinate NADP(+). FMN contacts are provided by residues Arg-125–Ser-127, Asn-238–Ala-239, Gly-278, Lys-293–Ser-297, and Arg-319.

This sequence belongs to the chorismate synthase family. Homotetramer. FMNH2 is required as a cofactor.

It carries out the reaction 5-O-(1-carboxyvinyl)-3-phosphoshikimate = chorismate + phosphate. It participates in metabolic intermediate biosynthesis; chorismate biosynthesis; chorismate from D-erythrose 4-phosphate and phosphoenolpyruvate: step 7/7. In terms of biological role, catalyzes the anti-1,4-elimination of the C-3 phosphate and the C-6 proR hydrogen from 5-enolpyruvylshikimate-3-phosphate (EPSP) to yield chorismate, which is the branch point compound that serves as the starting substrate for the three terminal pathways of aromatic amino acid biosynthesis. This reaction introduces a second double bond into the aromatic ring system. This Photorhabdus laumondii subsp. laumondii (strain DSM 15139 / CIP 105565 / TT01) (Photorhabdus luminescens subsp. laumondii) protein is Chorismate synthase.